Here is a 295-residue protein sequence, read N- to C-terminus: Ribosomal protein L11 methyltransferase (295 aa).

Residues Thr145, Gly166, Asp188, and Asn230 each coordinate S-adenosyl-L-methionine.

It belongs to the methyltransferase superfamily. PrmA family.

Its subcellular location is the cytoplasm. It carries out the reaction L-lysyl-[protein] + 3 S-adenosyl-L-methionine = N(6),N(6),N(6)-trimethyl-L-lysyl-[protein] + 3 S-adenosyl-L-homocysteine + 3 H(+). Functionally, methylates ribosomal protein L11. The protein is Ribosomal protein L11 methyltransferase of Shewanella amazonensis (strain ATCC BAA-1098 / SB2B).